Reading from the N-terminus, the 319-residue chain is Transcription initiation factor IIB 6 (319 aa).

Positions 1-16 (MTDARMRSREQERTDE) are enriched in basic and acidic residues. The segment at 1–33 (MTDARMRSREQERTDETESESTDGCPECGGLVV) is disordered. A TFIIB-type zinc finger spans residues 21 to 51 (STDGCPECGGLVVNDEEHGESVCADCGLVVE). The Zn(2+) site is built by Cys25, Cys28, Cys43, and Cys46. Positions 59–74 (PEWRAFDSKEKDEKSR) are enriched in basic and acidic residues. The interval 59 to 89 (PEWRAFDSKEKDEKSRVGAPTTNTMHDKGLS) is disordered. A run of 2 repeats spans residues 137-220 (GEID…VREL) and 231-312 (SYVP…ELLE).

The protein belongs to the TFIIB family.

Stabilizes TBP binding to an archaeal box-A promoter. Also responsible for recruiting RNA polymerase II to the pre-initiation complex (DNA-TBP-TFIIB). The chain is Transcription initiation factor IIB 6 from Halobacterium salinarum (strain ATCC 700922 / JCM 11081 / NRC-1) (Halobacterium halobium).